The sequence spans 695 residues: IQ domain-containing protein E (695 aa).

Residues 29–55 form a disordered region; sequence KAKRKAFHKPPPTSPKSPYLSKPRKVA. Coiled-coil stretches lie at residues 157 to 264, 292 to 358, and 387 to 477; these read LHVQ…RLQT, SALL…SSKS, and NKDH…CPEV. At Ser-322 the chain carries Phosphoserine. Disordered regions lie at residues 357 to 390, 465 to 521, 564 to 599, and 618 to 695; these read KSHA…NKDH, EMKK…RRDA, ASKA…TGSP, and RARH…NFPV. The span at 465–482 shows a compositional bias: basic and acidic residues; that stretch reads EMKKEEKEDCPEVPHKAQ. 2 IQ domains span residues 542–571 and 601–630; these read LDEA…HGSE and QEEA…RTTT.

Component of the EvC complex composed of EFCAB7, IQCE, EVC2 and EVC; built from two subcomplexes, EVC2:EVC and EFCAB7:IQCE. Interacts (via N-terminus) with EFCAB7 (via EF-hands 1 and 2); this interaction anchors the EVC-EVC2 complex in a signaling microdomain at the base of cilia and stimulates the Hedgehog (Hh) pathway. Interacts with EVC2 (via N-terminal end). Interacts with EVC.

It is found in the cell projection. Its subcellular location is the cilium membrane. Component of the EvC complex that positively regulates ciliary Hedgehog (Hh) signaling. Required for proper limb morphogenesis. In Homo sapiens (Human), this protein is IQ domain-containing protein E (IQCE).